The primary structure comprises 736 residues: ABC transporter G family member 16 (736 aa).

Positions 88–332 (LDFHDLVPWR…FAGFGNPIPE (245 aa)) constitute an ABC transporter domain. 125-132 (GASGSGKS) lines the ATP pocket. Transmembrane regions (helical) follow at residues 410 to 430 (SVINHGGGTLAVPAFANPFWI), 449 to 469 (LLGMRLATVIVTGFILATVFW), 484 to 504 (FFAFAMSTMFYTCADALPVFL), 525 to 545 (VLSHAIVTFPSLIFLSLAFAV), 569 to 589 (ASFWSGSSFVTFLSGVVPHVM), 590 to 610 (LGYTIVVAILAYFLLFSGFFI), and 709 to 729 (LLITVGFGFLFRILFYLCLLL). An ABC transmembrane type-2 domain is found at 430–640 (IEIKTLTRRS…PYEAVLQNEF (211 aa)).

The protein belongs to the ABC transporter superfamily. ABCG family. Eye pigment precursor importer (TC 3.A.1.204) subfamily.

The protein localises to the membrane. This Arabidopsis thaliana (Mouse-ear cress) protein is ABC transporter G family member 16 (ABCG16).